Reading from the N-terminus, the 212-residue chain is Ribosomal RNA small subunit methyltransferase G (212 aa).

S-adenosyl-L-methionine contacts are provided by residues Gly72, Leu77, 123–124 (VE), and Arg138.

This sequence belongs to the methyltransferase superfamily. RNA methyltransferase RsmG family.

The protein resides in the cytoplasm. The enzyme catalyses guanosine(527) in 16S rRNA + S-adenosyl-L-methionine = N(7)-methylguanosine(527) in 16S rRNA + S-adenosyl-L-homocysteine. Specifically methylates the N7 position of guanine in position 527 of 16S rRNA. The protein is Ribosomal RNA small subunit methyltransferase G of Histophilus somni (strain 129Pt) (Haemophilus somnus).